We begin with the raw amino-acid sequence, 191 residues long: ATP-dependent dethiobiotin synthetase BioD 2 (191 aa).

13–18 contacts ATP; sequence DVGKTI. Threonine 17 contributes to the Mg(2+) binding site. Lysine 38 is a catalytic residue. Substrate is bound at residue threonine 42. ATP contacts are provided by residues aspartate 50 and 115-118; that span reads EGAG. The Mg(2+) site is built by aspartate 50 and glutamate 115.

Belongs to the dethiobiotin synthetase family. In terms of assembly, homodimer. Mg(2+) serves as cofactor.

The protein localises to the cytoplasm. It carries out the reaction (7R,8S)-7,8-diammoniononanoate + CO2 + ATP = (4R,5S)-dethiobiotin + ADP + phosphate + 3 H(+). It participates in cofactor biosynthesis; biotin biosynthesis; biotin from 7,8-diaminononanoate: step 1/2. Functionally, catalyzes a mechanistically unusual reaction, the ATP-dependent insertion of CO2 between the N7 and N8 nitrogen atoms of 7,8-diaminopelargonic acid (DAPA, also called 7,8-diammoniononanoate) to form a ureido ring. The protein is ATP-dependent dethiobiotin synthetase BioD 2 of Haemophilus influenzae (strain ATCC 51907 / DSM 11121 / KW20 / Rd).